A 464-amino-acid polypeptide reads, in one-letter code: 2-oxoadipate dioxygenase/decarboxylase (464 aa).

2-oxoadipate is bound by residues histidine 70, arginine 74, and histidine 226. Histidine 70 lines the Fe(2+) pocket. The Fe(2+) site is built by histidine 226 and glutamate 294. Position 402 (valine 402) interacts with 2-oxoadipate.

It belongs to the 2-oxoadipate dioxygenase/decarboxylase family. Fe(2+) serves as cofactor.

The catalysed reaction is 2-oxoadipate + O2 = (R)-2-hydroxyglutarate + CO2. It functions in the pathway amino-acid degradation. Its activity is regulated as follows. Inhibited by EDTA. Functionally, catalyzes the decarboxylation and hydroxylation of 2-oxoadipate (2OA) to form D-2-hydroxyglutarate (D-2-HGA). Is specific for 2-oxoadipate. Is involved in a D-lysine catabolic pathway. This chain is 2-oxoadipate dioxygenase/decarboxylase, found in Pseudomonas putida (strain ATCC 47054 / DSM 6125 / CFBP 8728 / NCIMB 11950 / KT2440).